The chain runs to 149 residues: Large ribosomal subunit protein uL13 (149 aa).

This sequence belongs to the universal ribosomal protein uL13 family. As to quaternary structure, part of the 50S ribosomal subunit.

In terms of biological role, this protein is one of the early assembly proteins of the 50S ribosomal subunit, although it is not seen to bind rRNA by itself. It is important during the early stages of 50S assembly. In Gemmatimonas aurantiaca (strain DSM 14586 / JCM 11422 / NBRC 100505 / T-27), this protein is Large ribosomal subunit protein uL13.